The primary structure comprises 99 residues: Large ribosomal subunit protein bL28 (99 aa).

It belongs to the bacterial ribosomal protein bL28 family.

This is Large ribosomal subunit protein bL28 from Rhizobium etli (strain CIAT 652).